Here is a 149-residue protein sequence, read N- to C-terminus: Transcriptional repressor NrdR (149 aa).

A zinc finger lies at 3–34 (CPFCAMEETKVIDSRLVSDGYQVRRRRECGYC). One can recognise an ATP-cone domain in the interval 49–139 (PKIIKNDGSR…VYLSFDDINQ (91 aa)).

The protein belongs to the NrdR family. Zn(2+) serves as cofactor.

Negatively regulates transcription of bacterial ribonucleotide reductase nrd genes and operons by binding to NrdR-boxes. In Histophilus somni (strain 129Pt) (Haemophilus somnus), this protein is Transcriptional repressor NrdR.